The following is a 248-amino-acid chain: Ubiquinone biosynthesis O-methyltransferase (248 aa).

Positions 40, 71, 92, and 135 each coordinate S-adenosyl-L-methionine.

The protein belongs to the methyltransferase superfamily. UbiG/COQ3 family.

The catalysed reaction is a 3-demethylubiquinol + S-adenosyl-L-methionine = a ubiquinol + S-adenosyl-L-homocysteine + H(+). It catalyses the reaction a 3-(all-trans-polyprenyl)benzene-1,2-diol + S-adenosyl-L-methionine = a 2-methoxy-6-(all-trans-polyprenyl)phenol + S-adenosyl-L-homocysteine + H(+). It participates in cofactor biosynthesis; ubiquinone biosynthesis. Functionally, O-methyltransferase that catalyzes the 2 O-methylation steps in the ubiquinone biosynthetic pathway. The polypeptide is Ubiquinone biosynthesis O-methyltransferase (Dinoroseobacter shibae (strain DSM 16493 / NCIMB 14021 / DFL 12)).